The chain runs to 475 residues: 7-dehydrocholesterol reductase (475 aa).

The segment at 1 to 21 is disordered; sequence MAAKSQPNIPKAKSLDGVTND. At Ser-14 the chain carries Phosphoserine. The next 6 membrane-spanning stretches (helical) occupy residues 40 to 60, 154 to 174, 177 to 197, 266 to 286, 306 to 326, and 331 to 351; these read LASV…FIMA, THLL…TIIF, WIPL…FAMV, VTNA…DFFW, LGWG…LYLV, and QLST…YYIF. NADP(+) is bound by residues Lys-358, Arg-362, Leu-395, Trp-400, and 407–408; that span reads NY. A helical membrane pass occupies residues 420 to 440; that stretch reads LACGGGHLLPYFYIIYMAILL. Residues Asp-447, 451-455, and Tyr-462 each bind NADP(+); that span reads CASKY.

The protein belongs to the ERG4/ERG24 family. In terms of assembly, interacts with DHCR24; this interaction regulates DHCR7 activity. Interacts with TMEM147. As to expression, widely expressed. Most abundant in adrenal gland, liver, testis, and brain.

The protein resides in the endoplasmic reticulum membrane. It carries out the reaction cholesterol + NADP(+) = 7-dehydrocholesterol + NADPH + H(+). The enzyme catalyses 7-dehydrodesmosterol + NADPH + H(+) = desmosterol + NADP(+). It catalyses the reaction 5,6alpha-epoxy-5alpha-cholestan-3beta-ol + H2O = 5alpha-cholestane-3beta,5,6beta-triol. The catalysed reaction is 5,6beta-epoxy-5beta-cholestan-3beta-ol + H2O = 5alpha-cholestane-3beta,5,6beta-triol. Its pathway is steroid biosynthesis; cholesterol biosynthesis. 7-DHC reductase and cholesterol-5,6-epoxide hydrolase (ChEH) activities are inhibited by tamoxifen and the selective AEBS ligand (4-benzyl-phenoxy)-ethyl-N-pyrrolidine (PBPE). ChEH activity is inhibited by oleic acid. Its function is as follows. Oxidoreductase that catalyzes the last step of the cholesterol synthesis pathway, which transforms cholesta-5,7-dien-3beta-ol (7-dehydrocholesterol,7-DHC) into cholesterol by reducing the C7-C8 double bond of its sterol core. Can also metabolize cholesta-5,7,24-trien-3beta-ol (7-dehydrodemosterol, 7-DHD) to desmosterol, which is then metabolized by the Delta(24)-sterol reductase (DHCR24) to cholesterol. Modulates ferroptosis (a form of regulated cell death driven by iron-dependent lipid peroxidation) through the metabolic breakdown of the anti-ferroptotic metabolites 7-DHC and 7-DHD which, when accumulated, divert the propagation of peroxyl radical-mediated damage from phospholipid components to its sterol core, protecting plasma and mitochondrial membranes from phospholipid autoxidation. Functionally, component of the microsomal antiestrogen binding site (AEBS), a multiproteic complex at the ER membrane that consists of an association between cholestenol Delta-isomerase/EBP and DHCR7. This complex is responsible for cholesterol-5,6-epoxide hydrolase (ChEH) activity, which consists in the hydration of cholesterol-5,6-epoxides (5,6-EC) into cholestane-3beta,5alpha,6beta-triol (CT). The precise role of each component of this complex has not been described yet. The protein is 7-dehydrocholesterol reductase of Homo sapiens (Human).